A 384-amino-acid polypeptide reads, in one-letter code: Class V chitinase CHIT5a (384 aa).

The signal sequence occupies residues 1 to 27 (MAVQKIIITPILVFLVTIFFNVSSSSS). N-linked (GlcNAc...) asparagine glycosylation is found at Asn-29, Asn-114, and Asn-133. The GH18 domain occupies 39–384 (GVRSAYWPAG…SKQASNAWGH (346 aa)). Glu-152 acts as the Proton donor in catalysis. N-linked (GlcNAc...) asparagine glycosylation is found at Asn-195 and Asn-234.

Belongs to the glycosyl hydrolase 18 family. Chitinase class V subfamily.

The catalysed reaction is Random endo-hydrolysis of N-acetyl-beta-D-glucosaminide (1-&gt;4)-beta-linkages in chitin and chitodextrins.. The protein operates within glycan degradation; chitin degradation. Functionally, possesses chitinase activity in vitro toward glycol chitin, carboxymethyl-chitin, colloidal chitin, and the chitin oligosaccharides (N-acetylglucosamine) (GlcNAc)6 and (GlcNAc)5. Hydrolyzes (GlcNAc)6 into (GlcNAc)4 and (GlcNAc)2, or two (GlcNAc)3 molecules. Has the capacity to inhibit hyphal growth of the fungus Trichoderma viride in an agar-plate bioassay. This is Class V chitinase CHIT5a from Medicago truncatula (Barrel medic).